A 296-amino-acid polypeptide reads, in one-letter code: 4-hydroxy-tetrahydrodipicolinate synthase (296 aa).

Position 49 (T49) interacts with pyruvate. Catalysis depends on Y137, which acts as the Proton donor/acceptor. K166 acts as the Schiff-base intermediate with substrate in catalysis. Pyruvate is bound at residue I208.

Belongs to the DapA family. As to quaternary structure, homotetramer; dimer of dimers.

The protein localises to the cytoplasm. It catalyses the reaction L-aspartate 4-semialdehyde + pyruvate = (2S,4S)-4-hydroxy-2,3,4,5-tetrahydrodipicolinate + H2O + H(+). Its pathway is amino-acid biosynthesis; L-lysine biosynthesis via DAP pathway; (S)-tetrahydrodipicolinate from L-aspartate: step 3/4. Its function is as follows. Catalyzes the condensation of (S)-aspartate-beta-semialdehyde [(S)-ASA] and pyruvate to 4-hydroxy-tetrahydrodipicolinate (HTPA). The polypeptide is 4-hydroxy-tetrahydrodipicolinate synthase (Chlorobium limicola (strain DSM 245 / NBRC 103803 / 6330)).